A 426-amino-acid polypeptide reads, in one-letter code: Riboflavin biosynthesis protein PYRD, chloroplastic (426 aa).

The transit peptide at 1–61 (MQISCLPISI…SQTGFSNPVL (61 aa)) directs the protein to the chloroplast. A CMP/dCMP-type deaminase domain is found at 72-194 (VDDSFYMRKC…RLKDAGIDVT (123 aa)). Residue His-121 coordinates Zn(2+). Glu-123 acts as the Proton donor in catalysis. 2 residues coordinate Zn(2+): Cys-146 and Cys-155.

It depends on Zn(2+) as a cofactor.

The protein localises to the plastid. The protein resides in the chloroplast. It catalyses the reaction 2,5-diamino-6-hydroxy-4-(5-phosphoribosylamino)-pyrimidine + H2O + H(+) = 5-amino-6-(5-phospho-D-ribosylamino)uracil + NH4(+). The protein operates within cofactor biosynthesis; riboflavin biosynthesis; 5-amino-6-(D-ribitylamino)uracil from GTP: step 2/4. Monofunctional pyrimidine deaminase involved in the riboflavin biosynthesis pathway. Also has a reductase domain that lacks catalytically essential substrate-binding residues. The protein is Riboflavin biosynthesis protein PYRD, chloroplastic (PYRD) of Arabidopsis thaliana (Mouse-ear cress).